The chain runs to 777 residues: 1,4-alpha-glucan branching enzyme GlgB (777 aa).

The Nucleophile role is filled by Asp-408. Glu-461 serves as the catalytic Proton donor.

Belongs to the glycosyl hydrolase 13 family. GlgB subfamily. As to quaternary structure, monomer.

The enzyme catalyses Transfers a segment of a (1-&gt;4)-alpha-D-glucan chain to a primary hydroxy group in a similar glucan chain.. Its pathway is glycan biosynthesis; glycogen biosynthesis. Its function is as follows. Catalyzes the formation of the alpha-1,6-glucosidic linkages in glycogen by scission of a 1,4-alpha-linked oligosaccharide from growing alpha-1,4-glucan chains and the subsequent attachment of the oligosaccharide to the alpha-1,6 position. The polypeptide is 1,4-alpha-glucan branching enzyme GlgB (Actinobacillus pleuropneumoniae serotype 3 (strain JL03)).